Consider the following 148-residue polypeptide: Multiprotein-bridging factor 1c (148 aa).

The HTH cro/C1-type domain occupies 91–145 (IQKARLEKKMSQADLAKQINERTQVVQEYENGKAVPNQAVLAKMEKVLGVKLRGK). The H-T-H motif DNA-binding region spans 102–121 (QADLAKQINERTQVVQEYEN).

This sequence belongs to the MBF1 family. As to quaternary structure, binds to TPS5. In terms of tissue distribution, expressed in leaves, roots, stems, flowers, siliques and shoots. Not detected in seeds.

It is found in the nucleus. The protein localises to the nucleolus. It localises to the cytoplasm. Its function is as follows. Transcriptional coactivator that stimulates transcriptional activity by bridging regulatory proteins and TBP, thereby recruiting TBP to promoters occupied by DNA-binding regulators. Involved in the tolerance to heat and osmotic stress by partially activating the ethylene-response signal transduction pathway. The protein is Multiprotein-bridging factor 1c (MBF1C) of Arabidopsis thaliana (Mouse-ear cress).